The primary structure comprises 214 residues: Cytochrome b (214 aa).

The next 4 helical transmembrane spans lie at 31-51 (FGSM…FLAI), 75-96 (WIMQ…YTHI), 111-131 (WLSG…GYVL), and 176-196 (FFAL…IHIL). Heme b contacts are provided by histidine 81 and histidine 95. 2 residues coordinate heme b: histidine 180 and histidine 194. Histidine 199 is an a ubiquinone binding site.

It belongs to the cytochrome b family. In terms of assembly, the cytochrome bc1 complex contains 3 respiratory subunits (MT-CYB, CYC1 and UQCRFS1), 2 core proteins (UQCRC1 and UQCRC2) and probably 6 low-molecular weight proteins. The cofactor is heme b.

The protein resides in the mitochondrion inner membrane. Functionally, component of the ubiquinol-cytochrome c reductase complex (complex III or cytochrome b-c1 complex) that is part of the mitochondrial respiratory chain. The b-c1 complex mediates electron transfer from ubiquinol to cytochrome c. Contributes to the generation of a proton gradient across the mitochondrial membrane that is then used for ATP synthesis. This chain is Cytochrome b (MT-CYB), found in Lachesis muta muta (Bushmaster).